The sequence spans 317 residues: Ubiquinone biosynthesis protein COQ9-A, mitochondrial (317 aa).

The N-terminal 46 residues, 1-46, are a transit peptide targeting the mitochondrion; it reads MAASVTRVLKGAGGRQLLLMVARRRPVLMQPFLLMPRKFWVSSALR. The disordered stretch occupies residues 50 to 97; the sequence is QRQPPFSASSTHAETQGHAEEQYQQKQPPPRYTDQAGEESEGYESEEQ. The span at 53–63 shows a compositional bias: polar residues; the sequence is PPFSASSTHAE. Positions 85–96 are enriched in acidic residues; it reads AGEESEGYESEE. Arg243 serves as a coordination point for a 1,2-diacylglycero-3-phosphoethanolamine.

Belongs to the COQ9 family. In terms of assembly, homodimer. Heterodimer; two heterodimers of COQ7:COQ9 come together on the same side of the lipid pseudo-bilayer and form a curved tetramer with a hydrophobic surface suitable for membrane interaction. These two tetramers assemble into a soluble octamer with a pseudo-bilayer of lipids captured within. Interacts with COQ7; this interaction allows ubiquinone (CoQ) isoprene intermediates presentation to COQ7 and facilitates the COQ7-mediated hydroxylase step.

Its subcellular location is the mitochondrion. The protein operates within cofactor biosynthesis; ubiquinone biosynthesis. In terms of biological role, membrane-associated protein that warps the membrane surface to access and bind aromatic isoprenes with high specificity, including ubiquinone (CoQ) isoprene intermediates and presents them directly to COQ7, therefore facilitating the COQ7-mediated hydroxylase step. Participates in the biosynthesis of coenzyme Q, also named ubiquinone, an essential lipid-soluble electron transporter for aerobic cellular respiration. This chain is Ubiquinone biosynthesis protein COQ9-A, mitochondrial (coq9-a), found in Xenopus laevis (African clawed frog).